The primary structure comprises 120 residues: Nascent polypeptide-associated complex protein (120 aa).

The 69-residue stretch at G12–I80 folds into the NAC-A/B domain.

Belongs to the NAC-alpha family. In terms of assembly, homodimer. Interacts with the ribosome. Binds ribosomal RNA.

In terms of biological role, contacts the emerging nascent chain on the ribosome. In Methanosarcina mazei (strain ATCC BAA-159 / DSM 3647 / Goe1 / Go1 / JCM 11833 / OCM 88) (Methanosarcina frisia), this protein is Nascent polypeptide-associated complex protein.